The chain runs to 153 residues: Insulin-like growth factor 1 (153 aa).

The b stretch occupies residues 49-77 (GPETLCGAELVDALQFVCGDRGFYFNKPT). Disulfide bonds link Cys-54–Cys-96, Cys-66–Cys-109, and Cys-95–Cys-100. Positions 78-89 (GYGSSSRRAPQT) are c. An a region spans residues 90–110 (GIVDECCFRSCDLRRLEMYCA). The interval 111–118 (PLKPAKSA) is d. Residues 119–153 (RSVRAQRHTDMPKAQKEVHLKNASRGSAGNKNYRM) constitute a propeptide, e peptide. Residues 120–153 (SVRAQRHTDMPKAQKEVHLKNASRGSAGNKNYRM) form a disordered region. Basic and acidic residues predominate over residues 125–138 (RHTDMPKAQKEVHL). The segment covering 142–153 (SRGSAGNKNYRM) has biased composition (polar residues).

Belongs to the insulin family. Forms a ternary complex with IGFR1 and ITGAV:ITGB3. Forms a ternary complex with IGFR1 and ITGA6:ITGB4. Forms a ternary complex with IGFBP3 and ALS.

The protein resides in the secreted. The insulin-like growth factors, isolated from plasma, are structurally and functionally related to insulin but have a much higher growth-promoting activity. May be a physiological regulator of [1-14C]-2-deoxy-D-glucose (2DG) transport and glycogen synthesis in osteoblasts. Stimulates glucose transport in bone-derived osteoblastic (PyMS) cells and is effective at much lower concentrations than insulin, not only regarding glycogen and DNA synthesis but also with regard to enhancing glucose uptake. May play a role in synapse maturation. Ca(2+)-dependent exocytosis of IGF1 is required for sensory perception of smell in the olfactory bulb. Acts as a ligand for IGF1R. Binds to the alpha subunit of IGF1R, leading to the activation of the intrinsic tyrosine kinase activity which autophosphorylates tyrosine residues in the beta subunit thus initiating a cascade of down-stream signaling events leading to activation of the PI3K-AKT/PKB and the Ras-MAPK pathways. Binds to integrins ITGAV:ITGB3 and ITGA6:ITGB4. Its binding to integrins and subsequent ternary complex formation with integrins and IGFR1 are essential for IGF1 signaling. Induces the phosphorylation and activation of IGFR1, MAPK3/ERK1, MAPK1/ERK2 and AKT1. As part of the MAPK/ERK signaling pathway, acts as a negative regulator of apoptosis in cardiomyocytes via promotion of STUB1/CHIP-mediated ubiquitination and degradation of ICER-type isoforms of CREM. The chain is Insulin-like growth factor 1 from Panthera tigris altaica (Siberian tiger).